The following is a 422-amino-acid chain: Probable glycosidase CRR1 (422 aa).

An N-terminal signal peptide occupies residues 1-20; that stretch reads MRISILQLVPVVGYIGFALG. A GH16 domain is found at 67-339; that stretch reads DEESCAPIPA…WENSPDIIEK (273 aa). Catalysis depends on E217, which acts as the Nucleophile. E221 acts as the Proton donor in catalysis.

The protein belongs to the glycosyl hydrolase 16 family. CRR1 subfamily.

It is found in the spore wall. Its function is as follows. Spore specific glycosidase involved in spore wall assembly during sporulation. May be involved in copper import. The polypeptide is Probable glycosidase CRR1 (CRR1) (Saccharomyces cerevisiae (strain ATCC 204508 / S288c) (Baker's yeast)).